The chain runs to 139 residues: ATP synthase epsilon chain (139 aa).

The protein belongs to the ATPase epsilon chain family. In terms of assembly, F-type ATPases have 2 components, CF(1) - the catalytic core - and CF(0) - the membrane proton channel. CF(1) has five subunits: alpha(3), beta(3), gamma(1), delta(1), epsilon(1). CF(0) has three main subunits: a, b and c.

Its subcellular location is the cell inner membrane. Produces ATP from ADP in the presence of a proton gradient across the membrane. The polypeptide is ATP synthase epsilon chain (Salmonella arizonae (strain ATCC BAA-731 / CDC346-86 / RSK2980)).